Reading from the N-terminus, the 356-residue chain is Peptide chain release factor 1 (356 aa).

Glutamine 233 is modified (N5-methylglutamine).

Belongs to the prokaryotic/mitochondrial release factor family. Post-translationally, methylated by PrmC. Methylation increases the termination efficiency of RF1.

The protein resides in the cytoplasm. Its function is as follows. Peptide chain release factor 1 directs the termination of translation in response to the peptide chain termination codons UAG and UAA. The sequence is that of Peptide chain release factor 1 from Bacillus licheniformis (strain ATCC 14580 / DSM 13 / JCM 2505 / CCUG 7422 / NBRC 12200 / NCIMB 9375 / NCTC 10341 / NRRL NRS-1264 / Gibson 46).